A 372-amino-acid chain; its full sequence is Glutamate 5-kinase (372 aa).

K14 is an ATP binding site. S54, D141, and N153 together coordinate substrate. ATP is bound at residue 173–174 (TD). The 79-residue stretch at 280 to 358 (RGRVVIDAGA…SEIESVLGHL (79 aa)) folds into the PUA domain.

The protein belongs to the glutamate 5-kinase family.

Its subcellular location is the cytoplasm. It catalyses the reaction L-glutamate + ATP = L-glutamyl 5-phosphate + ADP. It functions in the pathway amino-acid biosynthesis; L-proline biosynthesis; L-glutamate 5-semialdehyde from L-glutamate: step 1/2. Catalyzes the transfer of a phosphate group to glutamate to form L-glutamate 5-phosphate. The polypeptide is Glutamate 5-kinase (Cupriavidus pinatubonensis (strain JMP 134 / LMG 1197) (Cupriavidus necator (strain JMP 134))).